The primary structure comprises 95 residues: Putative ESAT-6-like protein X (95 aa).

Positions His72–Ser95 are disordered.

This sequence belongs to the WXG100 family.

In Mycobacterium leprae (strain TN), this protein is Putative ESAT-6-like protein X.